The following is a 337-amino-acid chain: Inositol 2-dehydrogenase (337 aa).

It belongs to the Gfo/Idh/MocA family. Homotetramer.

The enzyme catalyses myo-inositol + NAD(+) = scyllo-inosose + NADH + H(+). Functionally, involved in the oxidation of myo-inositol (MI) to 2-keto-myo-inositol (2KMI or 2-inosose). In Corynebacterium glutamicum (strain ATCC 13032 / DSM 20300 / JCM 1318 / BCRC 11384 / CCUG 27702 / LMG 3730 / NBRC 12168 / NCIMB 10025 / NRRL B-2784 / 534), this protein is Inositol 2-dehydrogenase.